The sequence spans 518 residues: Phenylacetate 2-hydroxylase (518 aa).

C437 provides a ligand contact to heme.

This sequence belongs to the cytochrome P450 family.

The catalysed reaction is 2-phenylacetate + reduced [NADPH--hemoprotein reductase] + O2 = (2-hydroxyphenyl)acetate + oxidized [NADPH--hemoprotein reductase] + H2O + H(+). The protein operates within aromatic compound metabolism; phenylacetate degradation. Catalyzes the hydroxylation of phenylacetate to 2-hydroxyphenylacetate in the homogentisate pathway. The homogentisate pathway is used to catabolize phenylacetate and use it as a carbon source. Can also catalyze the hydroxylation of 3-hydroxyphenylacetate to 2,5-dihydroxyphenylacetate (homogentisate) at low efficiency. The protein is Phenylacetate 2-hydroxylase (phacA) of Emericella nidulans (Aspergillus nidulans).